The chain runs to 217 residues: Ribonuclease T (217 aa).

An Exonuclease domain is found at 20–194 (VVIDVETGGF…YDTDRTAELF (175 aa)). 4 residues coordinate Mg(2+): aspartate 23, glutamate 25, histidine 181, and aspartate 186. Residue histidine 181 is the Proton donor/acceptor of the active site.

This sequence belongs to the RNase T family. Homodimer. The cofactor is Mg(2+).

Trims short 3' overhangs of a variety of RNA species, leaving a one or two nucleotide 3' overhang. Responsible for the end-turnover of tRNA: specifically removes the terminal AMP residue from uncharged tRNA (tRNA-C-C-A). Also appears to be involved in tRNA biosynthesis. The protein is Ribonuclease T of Photorhabdus laumondii subsp. laumondii (strain DSM 15139 / CIP 105565 / TT01) (Photorhabdus luminescens subsp. laumondii).